The sequence spans 291 residues: Methionine aminopeptidase (291 aa).

H118 is a substrate binding site. A divalent metal cation-binding residues include D135, D146, and H209. H216 lines the substrate pocket. The a divalent metal cation site is built by E241 and E273.

The protein belongs to the peptidase M24A family. Methionine aminopeptidase type 1 subfamily. In terms of assembly, monomer. The cofactor is Co(2+). It depends on Zn(2+) as a cofactor. Requires Mn(2+) as cofactor. Fe(2+) is required as a cofactor.

The enzyme catalyses Release of N-terminal amino acids, preferentially methionine, from peptides and arylamides.. Removes the N-terminal methionine from nascent proteins. The N-terminal methionine is often cleaved when the second residue in the primary sequence is small and uncharged (Met-Ala-, Cys, Gly, Pro, Ser, Thr, or Val). Requires deformylation of the N(alpha)-formylated initiator methionine before it can be hydrolyzed. This is Methionine aminopeptidase from Chlamydia trachomatis serovar D (strain ATCC VR-885 / DSM 19411 / UW-3/Cx).